The primary structure comprises 570 residues: Glutamate--tRNA ligase (570 aa).

The 'HIGH' region signature appears at 105-115 (PNPDGAFHLGN).

The protein belongs to the class-I aminoacyl-tRNA synthetase family. Glutamate--tRNA ligase type 2 subfamily.

The protein localises to the cytoplasm. The catalysed reaction is tRNA(Glu) + L-glutamate + ATP = L-glutamyl-tRNA(Glu) + AMP + diphosphate. Catalyzes the attachment of glutamate to tRNA(Glu) in a two-step reaction: glutamate is first activated by ATP to form Glu-AMP and then transferred to the acceptor end of tRNA(Glu). The protein is Glutamate--tRNA ligase of Pyrococcus horikoshii (strain ATCC 700860 / DSM 12428 / JCM 9974 / NBRC 100139 / OT-3).